A 200-amino-acid polypeptide reads, in one-letter code: Phospholipase A2 inhibitor LNF1 (200 aa).

Residues 1–19 (MKYLHTICLLFIFVARGNS) form the signal peptide. Intrachain disulfides connect C22-C46, C25-C32, C39-C67, C73-C94, C95-C100, C118-C143, C136-C165, and C169-C191. N176 is a glycosylation site (N-linked (GlcNAc...) asparagine).

Belongs to the CNF-like-inhibitor family. As to quaternary structure, occurs as a mixture of oligomers. Tetrameric arrangement appears to be the predominant quaternary structure. Expressed by the liver.

The protein resides in the secreted. In terms of biological role, inhibits the enzymatic activity of phospholipase A2 (PA2). This is Phospholipase A2 inhibitor LNF1 from Lachesis muta muta (Bushmaster).